The following is a 110-amino-acid chain: UPF0060 membrane protein Bcen_0802 (110 aa).

The next 4 helical transmembrane spans lie at 9–29 (ALFA…WLVL), 34–54 (PAWL…LLTL), 66–86 (YGGV…GVAL), and 88–108 (RWDV…ALQP).

The protein belongs to the UPF0060 family.

Its subcellular location is the cell inner membrane. The polypeptide is UPF0060 membrane protein Bcen_0802 (Burkholderia orbicola (strain AU 1054)).